Consider the following 297-residue polypeptide: Tyrosine recombinase XerC (297 aa).

One can recognise a Core-binding (CB) domain in the interval methionine 1–lysine 83. The 188-residue stretch at threonine 104–aspartate 291 folds into the Tyr recombinase domain. Catalysis depends on residues arginine 148, lysine 172, histidine 243, arginine 246, and histidine 269. The active-site O-(3'-phospho-DNA)-tyrosine intermediate is the tyrosine 278.

This sequence belongs to the 'phage' integrase family. XerC subfamily. Forms a cyclic heterotetrameric complex composed of two molecules of XerC and two molecules of XerD.

It localises to the cytoplasm. Functionally, site-specific tyrosine recombinase, which acts by catalyzing the cutting and rejoining of the recombining DNA molecules. The XerC-XerD complex is essential to convert dimers of the bacterial chromosome into monomers to permit their segregation at cell division. It also contributes to the segregational stability of plasmids. This chain is Tyrosine recombinase XerC, found in Mycobacterium leprae (strain TN).